The primary structure comprises 221 residues: Probable septum site-determining protein MinC (221 aa).

The protein belongs to the MinC family. Interacts with MinD and FtsZ.

In terms of biological role, cell division inhibitor that blocks the formation of polar Z ring septums. Rapidly oscillates between the poles of the cell to destabilize FtsZ filaments that have formed before they mature into polar Z rings. Prevents FtsZ polymerization. The polypeptide is Probable septum site-determining protein MinC (Prochlorococcus marinus (strain SARG / CCMP1375 / SS120)).